A 61-amino-acid chain; its full sequence is Large ribosomal subunit protein eL20 (61 aa).

Belongs to the eukaryotic ribosomal protein eL20 family. Part of the 50S ribosomal subunit. Binds 23S rRNA.

The protein is Large ribosomal subunit protein eL20 of Methanosarcina mazei (strain ATCC BAA-159 / DSM 3647 / Goe1 / Go1 / JCM 11833 / OCM 88) (Methanosarcina frisia).